A 28-amino-acid polypeptide reads, in one-letter code: Short cationic peptide-1b (28 aa).

Glu28 bears the Glutamic acid 1-amide mark.

Expressed by the venom gland.

The protein resides in the secreted. The polypeptide is Short cationic peptide-1b (Cupiennius salei (American wandering spider)).